The following is a 266-amino-acid chain: Glutamate racemase (266 aa).

Residues aspartate 9 to serine 10 and tyrosine 41 to glycine 42 each bind substrate. The active-site Proton donor/acceptor is the cysteine 72. Asparagine 73–threonine 74 is a substrate binding site. The active-site Proton donor/acceptor is cysteine 184. Residue threonine 185–histidine 186 coordinates substrate.

This sequence belongs to the aspartate/glutamate racemases family.

It carries out the reaction L-glutamate = D-glutamate. Its pathway is cell wall biogenesis; peptidoglycan biosynthesis. Functionally, provides the (R)-glutamate required for cell wall biosynthesis. The polypeptide is Glutamate racemase (Staphylococcus carnosus (strain TM300)).